The primary structure comprises 232 residues: Imidazole glycerol phosphate synthase subunit HisF (232 aa).

Active-site residues include Asp11 and Asp130.

This sequence belongs to the HisA/HisF family. In terms of assembly, heterodimer of HisH and HisF.

The protein localises to the cytoplasm. The enzyme catalyses 5-[(5-phospho-1-deoxy-D-ribulos-1-ylimino)methylamino]-1-(5-phospho-beta-D-ribosyl)imidazole-4-carboxamide + L-glutamine = D-erythro-1-(imidazol-4-yl)glycerol 3-phosphate + 5-amino-1-(5-phospho-beta-D-ribosyl)imidazole-4-carboxamide + L-glutamate + H(+). Its pathway is amino-acid biosynthesis; L-histidine biosynthesis; L-histidine from 5-phospho-alpha-D-ribose 1-diphosphate: step 5/9. Functionally, IGPS catalyzes the conversion of PRFAR and glutamine to IGP, AICAR and glutamate. The HisF subunit catalyzes the cyclization activity that produces IGP and AICAR from PRFAR using the ammonia provided by the HisH subunit. The chain is Imidazole glycerol phosphate synthase subunit HisF from Listeria monocytogenes serotype 4a (strain HCC23).